Consider the following 440-residue polypeptide: Ribosomal protein uS12 methylthiotransferase RimO (440 aa).

In terms of domain architecture, MTTase N-terminal spans 5-116 (PTIAISHLGC…IVNVIERAEQ (112 aa)). [4Fe-4S] cluster contacts are provided by cysteine 14, cysteine 50, cysteine 79, cysteine 154, cysteine 158, and cysteine 161. A Radical SAM core domain is found at 140 to 370 (TTTEGVAYLR…ALQQPISWRK (231 aa)). The 67-residue stretch at 372 to 438 (QQEVGKTVEV…EYDLFGQVVS (67 aa)) folds into the TRAM domain.

The protein belongs to the methylthiotransferase family. RimO subfamily. [4Fe-4S] cluster serves as cofactor.

The protein resides in the cytoplasm. It carries out the reaction L-aspartate(89)-[ribosomal protein uS12]-hydrogen + (sulfur carrier)-SH + AH2 + 2 S-adenosyl-L-methionine = 3-methylsulfanyl-L-aspartate(89)-[ribosomal protein uS12]-hydrogen + (sulfur carrier)-H + 5'-deoxyadenosine + L-methionine + A + S-adenosyl-L-homocysteine + 2 H(+). In terms of biological role, catalyzes the methylthiolation of an aspartic acid residue of ribosomal protein uS12. In Trichormus variabilis (strain ATCC 29413 / PCC 7937) (Anabaena variabilis), this protein is Ribosomal protein uS12 methylthiotransferase RimO.